Consider the following 136-residue polypeptide: NADPH-dependent 7-cyano-7-deazaguanine reductase (136 aa).

Cysteine 53 serves as the catalytic Thioimide intermediate. The active-site Proton donor is aspartate 60. Residues 75–77 (VEL) and 94–95 (HE) each bind substrate.

Belongs to the GTP cyclohydrolase I family. QueF type 1 subfamily.

Its subcellular location is the cytoplasm. The catalysed reaction is 7-aminomethyl-7-carbaguanine + 2 NADP(+) = 7-cyano-7-deazaguanine + 2 NADPH + 3 H(+). It participates in tRNA modification; tRNA-queuosine biosynthesis. Functionally, catalyzes the NADPH-dependent reduction of 7-cyano-7-deazaguanine (preQ0) to 7-aminomethyl-7-deazaguanine (preQ1). The polypeptide is NADPH-dependent 7-cyano-7-deazaguanine reductase (Trichormus variabilis (strain ATCC 29413 / PCC 7937) (Anabaena variabilis)).